The sequence spans 191 residues: Cell division protein SepF (191 aa).

The tract at residues 21–96 (EVEEPAVASV…NQQPAQEKTT (76 aa)) is disordered. Positions 25–56 (PAVASVKRQQDAAQPASQQQKAQSHQYHQSAS) are enriched in low complexity. 2 stretches are compositionally biased toward polar residues: residues 57-69 (RPSQQQVQSGQNR) and 86-95 (HNQQPAQEKT).

Belongs to the SepF family. Homodimer. Interacts with FtsZ.

The protein resides in the cytoplasm. Its function is as follows. Cell division protein that is part of the divisome complex and is recruited early to the Z-ring. Probably stimulates Z-ring formation, perhaps through the cross-linking of FtsZ protofilaments. Its function overlaps with FtsA. The protein is Cell division protein SepF of Streptococcus mutans serotype c (strain ATCC 700610 / UA159).